We begin with the raw amino-acid sequence, 296 residues long: mRNA export factor rsm1 (296 aa).

The C3HC-type zinc finger occupies P40 to T174.

It is found in the cytoplasm. The protein resides in the nucleus. In terms of biological role, involved in the export of mRNA from the nucleus to the cytoplasm. The chain is mRNA export factor rsm1 (rsm1) from Schizosaccharomyces pombe (strain 972 / ATCC 24843) (Fission yeast).